We begin with the raw amino-acid sequence, 111 residues long: uncharacterized protein (111 aa).

2 consecutive transmembrane segments (helical) span residues 27-47 (IIVL…GYKF) and 80-100 (IFTG…ISAI).

It is found in the membrane. This is an uncharacterized protein from Acanthamoeba polyphaga (Amoeba).